A 522-amino-acid polypeptide reads, in one-letter code: Tyrosine-protein phosphatase 1 (522 aa).

Positions 32-63 (RSNSSISLSSSSHSSFSRMGSLGSLPTNSGSS) are disordered. Low complexity predominate over residues 33–63 (SNSSISLSSSSHSSFSRMGSLGSLPTNSGSS). In terms of domain architecture, Tyrosine-protein phosphatase spans 97–471 (IKEEFRLLEE…LFCYKTILDE (375 aa)). The Phosphocysteine intermediate role is filled by cysteine 310. A PTPase insert (Asn-rich) region spans residues 327 to 426 (MKKLDHYFKQ…DDAAESDLKY (100 aa)). A compositionally biased stretch (low complexity) spans 382–410 (NNNNNNNLNNNNNINNNSNGSNNTPQTEP). Residues 382–420 (NNNNNNNLNNNNNINNNSNGSNNTPQTEPNNEEDDDDAA) form a disordered region. The span at 411-420 (NNEEDDDDAA) shows a compositional bias: acidic residues.

The protein belongs to the protein-tyrosine phosphatase family. Non-receptor class subfamily. As to expression, expressed predominantly in anterior-like cells and to a lesser degree in prestalk cells.

The protein localises to the cytoplasm. The protein resides in the cell membrane. It carries out the reaction O-phospho-L-tyrosyl-[protein] + H2O = L-tyrosyl-[protein] + phosphate. Its function is as follows. May have a role in growth and in the early stages of development. Affects the timing of development. This chain is Tyrosine-protein phosphatase 1 (ptpA1-1), found in Dictyostelium discoideum (Social amoeba).